We begin with the raw amino-acid sequence, 415 residues long: Very late expression factor 1 (415 aa).

A Tyr recombinase domain is found at 171 to 357 (REIINTILDC…DESDDNDEDD (187 aa)). Catalysis depends on residues Arg-214, Lys-242, Arg-307, and His-330. The disordered stretch occupies residues 339–415 (YLNKYDVGVD…GDDADLLSFN (77 aa)). Residue Tyr-343 is the O-(3'-phospho-DNA)-tyrosine intermediate of the active site. Positions 346–363 (GVDESDDNDEDDDDDEND) are enriched in acidic residues. The span at 375–404 (NISNYDINNSSSGNSSSNNTSGNDFNNNIS) shows a compositional bias: low complexity.

This sequence belongs to the 'phage' integrase family.

In terms of biological role, involved in very late gene activation. This is Very late expression factor 1 (VLF-1) from Heliothis zea nuclear polyhedrosis virus (HzSNPV).